Here is a 311-residue protein sequence, read N- to C-terminus: tRNA-cytidine(32) 2-sulfurtransferase (311 aa).

Residues 47–52 carry the PP-loop motif motif; that stretch reads SGGKDS. Residues Cys-122, Cys-125, and Cys-213 each contribute to the [4Fe-4S] cluster site.

Belongs to the TtcA family. As to quaternary structure, homodimer. It depends on Mg(2+) as a cofactor. [4Fe-4S] cluster serves as cofactor.

The protein resides in the cytoplasm. The enzyme catalyses cytidine(32) in tRNA + S-sulfanyl-L-cysteinyl-[cysteine desulfurase] + AH2 + ATP = 2-thiocytidine(32) in tRNA + L-cysteinyl-[cysteine desulfurase] + A + AMP + diphosphate + H(+). It participates in tRNA modification. Its function is as follows. Catalyzes the ATP-dependent 2-thiolation of cytidine in position 32 of tRNA, to form 2-thiocytidine (s(2)C32). The sulfur atoms are provided by the cysteine/cysteine desulfurase (IscS) system. The chain is tRNA-cytidine(32) 2-sulfurtransferase from Escherichia fergusonii (strain ATCC 35469 / DSM 13698 / CCUG 18766 / IAM 14443 / JCM 21226 / LMG 7866 / NBRC 102419 / NCTC 12128 / CDC 0568-73).